A 395-amino-acid polypeptide reads, in one-letter code: S-adenosylmethionine synthase (395 aa).

His16 is an ATP binding site. Mg(2+) is bound at residue Asp18. Glu44 is a K(+) binding site. Glu57 and Gln100 together coordinate L-methionine. The interval Gln100–Arg110 is flexible loop. ATP contacts are provided by residues Asp167–Lys169, Arg233–Phe234, Asp242, Arg248–Lys249, Ala265, and Lys269. Asp242 is an L-methionine binding site. An L-methionine-binding site is contributed by Lys273.

Belongs to the AdoMet synthase family. As to quaternary structure, homotetramer; dimer of dimers. Mg(2+) serves as cofactor. K(+) is required as a cofactor.

The protein resides in the cytoplasm. It carries out the reaction L-methionine + ATP + H2O = S-adenosyl-L-methionine + phosphate + diphosphate. The protein operates within amino-acid biosynthesis; S-adenosyl-L-methionine biosynthesis; S-adenosyl-L-methionine from L-methionine: step 1/1. Catalyzes the formation of S-adenosylmethionine (AdoMet) from methionine and ATP. The overall synthetic reaction is composed of two sequential steps, AdoMet formation and the subsequent tripolyphosphate hydrolysis which occurs prior to release of AdoMet from the enzyme. This Burkholderia lata (strain ATCC 17760 / DSM 23089 / LMG 22485 / NCIMB 9086 / R18194 / 383) protein is S-adenosylmethionine synthase.